A 390-amino-acid polypeptide reads, in one-letter code: Succinate--CoA ligase [ADP-forming] subunit beta (390 aa).

The ATP-grasp domain occupies 9–248; that stretch reads KDILRKFGVS…ISEEDPFEVE (240 aa). ATP contacts are provided by residues lysine 50, 57–59, glutamate 103, methionine 106, and glutamate 111; that span reads GRG. Mg(2+) contacts are provided by asparagine 203 and aspartate 217. Substrate is bound by residues asparagine 268 and 325-327; that span reads GIV.

It belongs to the succinate/malate CoA ligase beta subunit family. Heterotetramer of two alpha and two beta subunits. Mg(2+) is required as a cofactor.

It catalyses the reaction succinate + ATP + CoA = succinyl-CoA + ADP + phosphate. The enzyme catalyses GTP + succinate + CoA = succinyl-CoA + GDP + phosphate. It functions in the pathway carbohydrate metabolism; tricarboxylic acid cycle; succinate from succinyl-CoA (ligase route): step 1/1. Functionally, succinyl-CoA synthetase functions in the citric acid cycle (TCA), coupling the hydrolysis of succinyl-CoA to the synthesis of either ATP or GTP and thus represents the only step of substrate-level phosphorylation in the TCA. The beta subunit provides nucleotide specificity of the enzyme and binds the substrate succinate, while the binding sites for coenzyme A and phosphate are found in the alpha subunit. This is Succinate--CoA ligase [ADP-forming] subunit beta from Prosthecochloris aestuarii (strain DSM 271 / SK 413).